A 267-amino-acid polypeptide reads, in one-letter code: Rhomboid-type serine protease 2 (267 aa).

The next 6 membrane-spanning stretches (helical) occupy residues leucine 20–glutamine 40, phenylalanine 67–leucine 87, threonine 99–isoleucine 119, alanine 126–isoleucine 146, phenylalanine 155–isoleucine 179, and leucine 185–alanine 206. Catalysis depends on serine 134, which acts as the Nucleophile. Histidine 187 is an active-site residue. Residues arginine 247–proline 267 form a disordered region.

This sequence belongs to the peptidase S54 family.

The protein localises to the golgi apparatus membrane. It is found in the golgi apparatus. Its subcellular location is the cis-Golgi network membrane. The enzyme catalyses Cleaves type-1 transmembrane domains using a catalytic dyad composed of serine and histidine that are contributed by different transmembrane domains.. Its function is as follows. Probable rhomboid-type serine protease that catalyzes intramembrane proteolysis. This is Rhomboid-type serine protease 2 (RBD2) from Gibberella zeae (strain ATCC MYA-4620 / CBS 123657 / FGSC 9075 / NRRL 31084 / PH-1) (Wheat head blight fungus).